A 119-amino-acid polypeptide reads, in one-letter code: uncharacterized protein (119 aa).

Residues 63–104 (KKIKKELESNSEKRKAALQMIKEEHTAKVDRYKMIIEDLRQQ) adopt a coiled-coil conformation.

This is an uncharacterized protein from Bacillus subtilis (strain 168).